Reading from the N-terminus, the 366-residue chain is Phospho-N-acetylmuramoyl-pentapeptide-transferase (366 aa).

10 helical membrane-spanning segments follow: residues Ala27 to Leu47, Thr71 to Ala91, Leu93 to Phe113, Phe138 to Ala158, Leu174 to Gly194, Gly205 to Ala225, Leu245 to Pro265, Ala268 to Val288, Val297 to Phe317, and Gln343 to Leu363.

The protein belongs to the glycosyltransferase 4 family. MraY subfamily. It depends on Mg(2+) as a cofactor.

It localises to the cell inner membrane. It catalyses the reaction UDP-N-acetyl-alpha-D-muramoyl-L-alanyl-gamma-D-glutamyl-meso-2,6-diaminopimeloyl-D-alanyl-D-alanine + di-trans,octa-cis-undecaprenyl phosphate = di-trans,octa-cis-undecaprenyl diphospho-N-acetyl-alpha-D-muramoyl-L-alanyl-D-glutamyl-meso-2,6-diaminopimeloyl-D-alanyl-D-alanine + UMP. It functions in the pathway cell wall biogenesis; peptidoglycan biosynthesis. Catalyzes the initial step of the lipid cycle reactions in the biosynthesis of the cell wall peptidoglycan: transfers peptidoglycan precursor phospho-MurNAc-pentapeptide from UDP-MurNAc-pentapeptide onto the lipid carrier undecaprenyl phosphate, yielding undecaprenyl-pyrophosphoryl-MurNAc-pentapeptide, known as lipid I. This Sinorhizobium medicae (strain WSM419) (Ensifer medicae) protein is Phospho-N-acetylmuramoyl-pentapeptide-transferase.